We begin with the raw amino-acid sequence, 136 residues long: Histone H3.2 (136 aa).

Residues 1–43 (MARTKQTARKSTGGKAPRKQLATKAARKSAPATGGVKKPHRFR) form a disordered region. K5 bears the N6-methylated lysine mark. K10 bears the N6-acetyllysine; alternate mark. K10 bears the N6-methylated lysine; alternate mark. S11 bears the Phosphoserine mark. Residue T12 is modified to Phosphothreonine. The residue at position 15 (K15) is an N6-acetyllysine. Residues K19 and K24 each carry the N6-acetyllysine; alternate modification. K19 and K24 each carry N6-methylated lysine; alternate. K28 is modified (N6-methylated lysine). Residue S29 is modified to Phosphoserine. K37 carries the N6-methylated lysine modification.

It belongs to the histone H3 family. The nucleosome is a histone octamer containing two molecules each of H2A, H2B, H3 and H4 assembled in one H3-H4 heterotetramer and two H2A-H2B heterodimers. The octamer wraps approximately 147 bp of DNA. Post-translationally, acetylation is generally linked to gene activation. Can be acetylated to form H3K9ac, H3K14ac, H3K18ac and H3K23ac. H3K9ac could compete with H3K9me and prevent gene silencing. H3K9ac is restricted to euchromatin. Methylated to form mainly H3K4me, H3K9me, H3K18me, H3K23me, H3K27me and H3K36me. H3K4me1/2/3, H3K9me3, H3K27me3 and H3K36me1/2/3 are typical marks for euchromatin, whereas heterochromatic chromocenters are enriched in H3K9me1/2 and H3K27me1/2. H2BK143ub1 is probably prerequisite for H3K4me. In terms of processing, can be phosphorylated to form H3S10ph, H3T11ph and H3S28ph. Expressed in bicellular pollen, root tips, shoot apices, young leaves and ovules.

It is found in the nucleus. It localises to the nucleolus. The protein resides in the chromosome. Its function is as follows. Core component of nucleosome. Nucleosomes wrap and compact DNA into chromatin, limiting DNA accessibility to the cellular machineries which require DNA as a template. Histones thereby play a central role in transcription regulation, DNA repair, DNA replication and chromosomal stability. DNA accessibility is regulated via a complex set of post-translational modifications of histones, also called histone code, and nucleosome remodeling. This chain is Histone H3.2 (YAH3), found in Lilium longiflorum (Trumpet lily).